We begin with the raw amino-acid sequence, 306 residues long: UDP-3-O-acyl-N-acetylglucosamine deacetylase (306 aa).

Zn(2+) contacts are provided by histidine 79, histidine 238, and aspartate 242. Residue histidine 265 is the Proton donor of the active site.

It belongs to the LpxC family. The cofactor is Zn(2+).

It carries out the reaction a UDP-3-O-[(3R)-3-hydroxyacyl]-N-acetyl-alpha-D-glucosamine + H2O = a UDP-3-O-[(3R)-3-hydroxyacyl]-alpha-D-glucosamine + acetate. It participates in glycolipid biosynthesis; lipid IV(A) biosynthesis; lipid IV(A) from (3R)-3-hydroxytetradecanoyl-[acyl-carrier-protein] and UDP-N-acetyl-alpha-D-glucosamine: step 2/6. In terms of biological role, catalyzes the hydrolysis of UDP-3-O-myristoyl-N-acetylglucosamine to form UDP-3-O-myristoylglucosamine and acetate, the committed step in lipid A biosynthesis. In Hamiltonella defensa subsp. Acyrthosiphon pisum (strain 5AT), this protein is UDP-3-O-acyl-N-acetylglucosamine deacetylase.